We begin with the raw amino-acid sequence, 94 residues long: Pyrimidine/purine nucleoside phosphorylase (94 aa).

This sequence belongs to the nucleoside phosphorylase PpnP family.

The enzyme catalyses a purine D-ribonucleoside + phosphate = a purine nucleobase + alpha-D-ribose 1-phosphate. The catalysed reaction is adenosine + phosphate = alpha-D-ribose 1-phosphate + adenine. It carries out the reaction cytidine + phosphate = cytosine + alpha-D-ribose 1-phosphate. It catalyses the reaction guanosine + phosphate = alpha-D-ribose 1-phosphate + guanine. The enzyme catalyses inosine + phosphate = alpha-D-ribose 1-phosphate + hypoxanthine. The catalysed reaction is thymidine + phosphate = 2-deoxy-alpha-D-ribose 1-phosphate + thymine. It carries out the reaction uridine + phosphate = alpha-D-ribose 1-phosphate + uracil. It catalyses the reaction xanthosine + phosphate = alpha-D-ribose 1-phosphate + xanthine. In terms of biological role, catalyzes the phosphorolysis of diverse nucleosides, yielding D-ribose 1-phosphate and the respective free bases. Can use uridine, adenosine, guanosine, cytidine, thymidine, inosine and xanthosine as substrates. Also catalyzes the reverse reactions. The sequence is that of Pyrimidine/purine nucleoside phosphorylase from Citrobacter koseri (strain ATCC BAA-895 / CDC 4225-83 / SGSC4696).